A 163-amino-acid polypeptide reads, in one-letter code: Disulfide bond formation protein B (163 aa).

The Cytoplasmic segment spans residues 1-9 (MKKLTYRKI). The chain crosses the membrane as a helical span at residues 10-26 (QSFQAIITVLVIFASFY). The Periplasmic portion of the chain corresponds to 27 to 44 (LEYAAGLQPCPLCLMQRV). The cysteines at positions 36 and 39 are disulfide-linked. A helical transmembrane segment spans residues 45–58 (CVFILLGLMGVSLG). Topologically, residues 59–64 (TVKKAH) are cytoplasmic. The helical transmembrane segment at 65 to 82 (IVSLIQFQVACAGLYFSL) threads the bilayer. Residues 83–139 (RQLWLQSLPSDQAPACMPGLDVLIQYFPWQTVAKALFWGAGDCAEVTWTMFGVSMPG) are Periplasmic-facing. Cysteine 98 and cysteine 125 are disulfide-bonded. A helical transmembrane segment spans residues 140–158 (WAAMYFLSMAIMGLFLFFR). The Cytoplasmic portion of the chain corresponds to 159 to 163 (TRTIN).

This sequence belongs to the DsbB family.

Its subcellular location is the cell inner membrane. Required for disulfide bond formation in some periplasmic proteins. Acts by oxidizing the DsbA protein. This Legionella pneumophila (strain Lens) protein is Disulfide bond formation protein B.